Reading from the N-terminus, the 507-residue chain is Alpha-amylase 2 (507 aa).

Residues 1–20 (MKFATILSTTALALSSLVAS) form the signal peptide. C62 and C70 are disulfide-bonded. W115 serves as a coordination point for substrate. N153 provides a ligand contact to Ca(2+). H154 is a substrate binding site. C182 and C196 are oxidised to a cystine. Ca(2+)-binding residues include E194 and D207. N229 carries an N-linked (GlcNAc...) asparagine glycan. R236 serves as a coordination point for substrate. 3 residues coordinate Ca(2+): D238, H242, and E262. Residue D238 is the Nucleophile of the active site. 241 to 242 (KH) is a binding site for substrate. The active-site Proton donor is E262. Residue G266 participates in substrate binding. C272 and C315 are oxidised to a cystine. 2 residues coordinate substrate: D329 and R376. C470 and C505 are oxidised to a cystine.

This sequence belongs to the glycosyl hydrolase 13 family. The cofactor is Ca(2+).

It catalyses the reaction Endohydrolysis of (1-&gt;4)-alpha-D-glucosidic linkages in polysaccharides containing three or more (1-&gt;4)-alpha-linked D-glucose units.. This chain is Alpha-amylase 2 (SWA2), found in Schwanniomyces occidentalis (Yeast).